The primary structure comprises 416 residues: MSLVAIGINHKTATVDLREKVAFGPDKIHDAMKSLAASTQSGEAVIISTCNRTELYCNNCEAADVVAWLEDYHQLSHEDVEPCLYQYKGQEAVKHLMRVSAGLDSLILGEPQILGQVKQSFVKAKEAGTVAATMDRMFQNTFSVAKKIRTETEIGAAAVSVAFAAVSMAKHIFSSISTTQVLLVGAGETIELVARHLKDNGVTTMVVANRTISRAEAMCEEFGATAITLEQIPDFLPKADIVISSTASPLPILGKGMVEKALKQRRHQPMLLVDIAVPRDIEAEVADLDDAFLYTVDDLQSIIEQNMASRREAAEQAELIAEDQAYQFMEWIRSLESVDSIREYRTKSMAIKDELVERAVNKLAQGGNSEQVLLELANKLTNKLIHAPTQALTAASRQGDLNSLGQLRALLGLDKD.

Substrate-binding positions include 49-52 (TCNR), Ser-105, 110-112 (EPQ), and Gln-116. Residue Cys-50 is the Nucleophile of the active site. Residue 185-190 (GAGETI) participates in NADP(+) binding.

It belongs to the glutamyl-tRNA reductase family. Homodimer.

The catalysed reaction is (S)-4-amino-5-oxopentanoate + tRNA(Glu) + NADP(+) = L-glutamyl-tRNA(Glu) + NADPH + H(+). The protein operates within porphyrin-containing compound metabolism; protoporphyrin-IX biosynthesis; 5-aminolevulinate from L-glutamyl-tRNA(Glu): step 1/2. Catalyzes the NADPH-dependent reduction of glutamyl-tRNA(Glu) to glutamate 1-semialdehyde (GSA). The polypeptide is Glutamyl-tRNA reductase (Shewanella pealeana (strain ATCC 700345 / ANG-SQ1)).